A 236-amino-acid polypeptide reads, in one-letter code: Ubiquinone biosynthesis O-methyltransferase (236 aa).

S-adenosyl-L-methionine-binding residues include Arg36, Gly56, Asp77, and Met125.

Belongs to the methyltransferase superfamily. UbiG/COQ3 family.

The catalysed reaction is a 3-demethylubiquinol + S-adenosyl-L-methionine = a ubiquinol + S-adenosyl-L-homocysteine + H(+). The enzyme catalyses a 3-(all-trans-polyprenyl)benzene-1,2-diol + S-adenosyl-L-methionine = a 2-methoxy-6-(all-trans-polyprenyl)phenol + S-adenosyl-L-homocysteine + H(+). It participates in cofactor biosynthesis; ubiquinone biosynthesis. Its function is as follows. O-methyltransferase that catalyzes the 2 O-methylation steps in the ubiquinone biosynthetic pathway. The polypeptide is Ubiquinone biosynthesis O-methyltransferase (Haemophilus ducreyi (strain 35000HP / ATCC 700724)).